The chain runs to 294 residues: Flavin-dependent thymidylate synthase (294 aa).

Residues 27–250 (GFIRVIDYMG…PFTYEAFEEY (224 aa)) form the ThyX domain. FAD-binding positions include Thr73, 96 to 98 (RHR), and Glu104. DUMP contacts are provided by residues 93–96 (QWIR), 104–108 (EYSAR), and Arg189. The ThyX motif motif lies at 96 to 106 (RHRTASVNEYS). Residues 205-207 (NLH) and His211 contribute to the FAD site. Arg216 provides a ligand contact to dUMP. Arg216 functions as the Involved in ionization of N3 of dUMP, leading to its activation in the catalytic mechanism.

The protein belongs to the thymidylate synthase ThyX family. In terms of assembly, homotetramer. FAD serves as cofactor.

The catalysed reaction is dUMP + (6R)-5,10-methylene-5,6,7,8-tetrahydrofolate + NADPH + H(+) = dTMP + (6S)-5,6,7,8-tetrahydrofolate + NADP(+). Its pathway is pyrimidine metabolism; dTTP biosynthesis. In terms of biological role, catalyzes the reductive methylation of 2'-deoxyuridine-5'-monophosphate (dUMP) to 2'-deoxythymidine-5'-monophosphate (dTMP) while utilizing 5,10-methylenetetrahydrofolate (mTHF) as the methyl donor, and NADPH and FADH(2) as the reductant. The chain is Flavin-dependent thymidylate synthase from Rickettsia typhi (strain ATCC VR-144 / Wilmington).